The primary structure comprises 62 residues: Sperm protamine P1 (62 aa).

Positions 1-62 (MARYRHSRSR…RYSRRRRRRY (62 aa)) are disordered.

Belongs to the protamine P1 family. As to expression, testis.

The protein localises to the nucleus. The protein resides in the chromosome. In terms of biological role, protamines substitute for histones in the chromatin of sperm during the haploid phase of spermatogenesis. They compact sperm DNA into a highly condensed, stable and inactive complex. This chain is Sperm protamine P1 (PRM1), found in Notamacropus eugenii (Tammar wallaby).